The sequence spans 398 residues: Succinate--CoA ligase [ADP-forming] subunit beta (398 aa).

The ATP-grasp domain occupies 9-253; it reads KEILNSFGVR…VREENATEVE (245 aa). ATP contacts are provided by residues lysine 50, 57 to 59, valine 106, and glutamate 116; that span reads GRG. Mg(2+) contacts are provided by asparagine 208 and aspartate 222. Substrate is bound by residues asparagine 273 and 330–332; that span reads GIV.

The protein belongs to the succinate/malate CoA ligase beta subunit family. In terms of assembly, heterotetramer of two alpha and two beta subunits. Mg(2+) serves as cofactor.

It carries out the reaction succinate + ATP + CoA = succinyl-CoA + ADP + phosphate. The enzyme catalyses GTP + succinate + CoA = succinyl-CoA + GDP + phosphate. It functions in the pathway carbohydrate metabolism; tricarboxylic acid cycle; succinate from succinyl-CoA (ligase route): step 1/1. Its function is as follows. Succinyl-CoA synthetase functions in the citric acid cycle (TCA), coupling the hydrolysis of succinyl-CoA to the synthesis of either ATP or GTP and thus represents the only step of substrate-level phosphorylation in the TCA. The beta subunit provides nucleotide specificity of the enzyme and binds the substrate succinate, while the binding sites for coenzyme A and phosphate are found in the alpha subunit. The polypeptide is Succinate--CoA ligase [ADP-forming] subunit beta (Christiangramia forsetii (strain DSM 17595 / CGMCC 1.15422 / KT0803) (Gramella forsetii)).